Consider the following 94-residue polypeptide: Co-chaperonin GroES (94 aa).

The protein belongs to the GroES chaperonin family. Heptamer of 7 subunits arranged in a ring. Interacts with the chaperonin GroEL.

The protein localises to the cytoplasm. Functionally, together with the chaperonin GroEL, plays an essential role in assisting protein folding. The GroEL-GroES system forms a nano-cage that allows encapsulation of the non-native substrate proteins and provides a physical environment optimized to promote and accelerate protein folding. GroES binds to the apical surface of the GroEL ring, thereby capping the opening of the GroEL channel. This chain is Co-chaperonin GroES, found in Latilactobacillus sakei subsp. sakei (strain 23K) (Lactobacillus sakei subsp. sakei).